We begin with the raw amino-acid sequence, 1430 residues long: MGARASILSGGKLDEWEKIQLRPGGKKRYKMKHLIWASRELERFALDPGLLETSEGCQKIIRQLQPSLQTGSEELKSLFNTVAVLYYVHQRAGVTDTKEALDKLEEEQNKSQQKTQQAAADKGVSQNYPIVQNLQGQMVHQSLSPRTLNAWVKVIEEKAFSPEVIPMFSALSEGATPTDLNTMLNTVGGHQAAMQMLKDTINEEAAEWDRLHPVHAGPAPPGQMREPRGSDIAGTTSTLQEQIQWMTGNPPVPVGDIYKRWIILGLNKIVRMYSPVSILDIKQGPKEPFRDYVDRFFKVLRAEQASQDVKGWMTDTLLVQNANPDCKTILKALGTGATLEEMMTACQGVGGPSHKARVLAEAMSQANSAIMMQKSNFKGQRRVVKCFNCGKEGHIARNCRAPRKKGCWKCGREGHQMKDCTERQANFFRENLAFQQGEARKFPSEQTRANSPTSRELRVQRGDNPLSEAGAERRGTVPSLSFPQITLWQRPLVTIKIGGQIKEALLDTGADDTVLEDINLPGKWKPKMIGGIGGFIKVKQYDNILIEICGHKAIGTVLVGPTPVNIIGRNMLTQIGCTLNFPVSPIETVPVKLKPGMDGPKVKQWPLTEEKIKALTEICLEMEKEGKISKIGPENPYNTPVFAIKKKDSSKWRKLVDFKELNKRTQDFWEVQLGIPHPAGLKKKKSVTVLDVGDAYFSVPLDKDFKKYTAFTIPSVNNETPGIRYQYNVLPQGWKGSPAIFQCSMTKILEPFRMKNPDIVIYQYMDDLYVGSDLEIGQHRTKIEELREHLLRWGFTTPDKKHQKEPPFLWMGHELHPDKWTVQPIQLPNKDSWTVNDIQKLVGKLNWASQIYPGIKVRPLCKLLRGAKALTDIVPLTAEAELELAKNREILREPVHGVYYDPSKDLIAEIQKQGDGQWTYQIYQNPFKNLKTGKYAKVRSAHTNDVKQLTEAVQKIALESIVIWGKRSPKFKLPILKETWDTWWTDYWQATWIPEWEFVNTPPLVKLWYQLETEPIAGADTFYVDGASNRETKKGKAGYVTDKGKQKVVSLTETTNQKAELQAIYLALQDSGSEVNIVTDSQYALGIIQAQPDKSESEIVNQIIEQLIQKERVYLSWVPAHKGIGGNEQVDKLVSAGVRKILFLDGIDKAQEEHEKYHNNWRAMASDFNLPPIVAKEIVASCDKCQLKGEAMHGQVDCSPGIWQLDCTHLEGKVILVAVHVASEYIEAEVIPAETGQETAYFILKLAGRWPVKIIHTDNGSNFTSAAVKASCWWAGIQQEFGIPYNPQSQGVVESINKELKKIIGQVRDQAEHLKTAVQMAVFIHNFKRKGGIGGYSAGERIIDIISTDIQTRELQKQITKIQNFRVYYRDSRNPVWKGPAKLLWKGEGAVVIQDNSEIKIVPRRKAKIIRDYGKQMAVDDCVAGRQDED.

Glycine 2 carries N-myristoyl glycine; by host lipidation. The interval 7 to 31 is interaction with Gp41; it reads ILSGGKLDEWEKIQLRPGGKKRYKM. Residues 8 to 43 are interaction with host CALM1; sequence LSGGKLDEWEKIQLRPGGKKRYKMKHLIWASRELER. An interaction with host AP3D1 region spans residues 12 to 19; the sequence is KLDEWEKI. The tract at residues 14-33 is interaction with membrane phosphatidylinositol 4,5-bisphosphate and RNA; sequence DEWEKIQLRPGGKKRYKMKH. Positions 16–22 match the Nuclear export signal motif; it reads WEKIQLR. The Nuclear localization signal motif lies at 26–32; the sequence is KKRYKMK. The segment at 73–77 is interaction with membrane phosphatidylinositol 4,5-bisphosphate; sequence EELKS. Tyrosine 128 is modified (phosphotyrosine; by host). Positions 185–223 are interaction with human PPIA/CYPA and NUP153; that stretch reads NTVGGHQAAMQMLKDTINEEAAEWDRLHPVHAGPAPPGQ. The segment at 273–359 is dimerization/Multimerization of capsid protein p24; it reads YSPVSILDIK…GGPSHKARVL (87 aa). 2 consecutive CCHC-type zinc fingers follow at residues 384-401 and 405-422; these read VKCF…NCRA and KGCW…DCTE. The interval 438 to 475 is disordered; sequence EARKFPSEQTRANSPTSRELRVQRGDNPLSEAGAERRG. The segment covering 444–454 has biased composition (polar residues); that stretch reads SEQTRANSPTS. The segment at 483-487 is dimerization of protease; that stretch reads PQITL. The Peptidase A2 domain maps to 502-571; sequence KEALLDTGAD…TPVNIIGRNM (70 aa). Aspartate 507 (for protease activity; shared with dimeric partner) is an active-site residue. Dimerization of protease stretches follow at residues 531–537 and 570–582; these read GIGGFIK and NMLT…LNFP. The Reverse transcriptase domain occupies 625-815; the sequence is EGKISKIGPE…PPFLWMGHEL (191 aa). Mg(2+)-binding residues include aspartate 691, aspartate 766, and aspartate 767. The tract at residues 808–816 is RT 'primer grip'; the sequence is FLWMGHELH. Residues 980–996 carry the Tryptophan repeat motif motif; that stretch reads WDTWWTDYWQATWIPEW. The region spanning 1016–1139 is the RNase H type-1 domain; the sequence is IAGADTFYVD…VDKLVSAGVR (124 aa). Aspartate 1025, glutamate 1060, aspartate 1080, and aspartate 1131 together coordinate Mg(2+). The segment at 1145–1186 adopts an Integrase-type zinc-finger fold; that stretch reads DGIDKAQEEHEKYHNNWRAMASDFNLPPIVAKEIVASCDKCQ. Zn(2+) contacts are provided by histidine 1154, histidine 1158, cysteine 1182, and cysteine 1185. The Integrase catalytic domain occupies 1196-1346; it reads VDCSPGIWQL…SAGERIIDII (151 aa). Residues aspartate 1206, aspartate 1258, and glutamate 1294 each contribute to the Mg(2+) site. Residues 1365–1412 constitute a DNA-binding region (integrase-type); it reads FRVYYRDSRNPVWKGPAKLLWKGEGAVVIQDNSEIKIVPRRKAKIIRD.

As to quaternary structure, homotrimer; further assembles as hexamers of trimers. Interacts with gp41 (via C-terminus). Interacts with host CALM1; this interaction induces a conformational change in the Matrix protein, triggering exposure of the myristate group. Interacts with host AP3D1; this interaction allows the polyprotein trafficking to multivesicular bodies during virus assembly. Part of the pre-integration complex (PIC) which is composed of viral genome, matrix protein, Vpr and integrase. Homodimer; the homodimer further multimerizes as homohexamers or homopentamers. Interacts with human PPIA/CYPA; This interaction stabilizes the capsid. Interacts with human NUP153. Interacts with host PDZD8; this interaction stabilizes the capsid. Interacts with monkey TRIM5; this interaction destabilizes the capsid. In terms of assembly, homodimer, whose active site consists of two apposed aspartic acid residues. As to quaternary structure, heterodimer of p66 RT and p51 RT (RT p66/p51). Heterodimerization of RT is essential for DNA polymerase activity. The overall folding of the subdomains is similar in p66 RT and p51 RT but the spatial arrangements of the subdomains are dramatically different. Homotetramer; may further associate as a homohexadecamer. Part of the pre-integration complex (PIC) which is composed of viral genome, matrix protein, Vpr and integrase. Interacts with human SMARCB1/INI1 and human PSIP1/LEDGF isoform 1. Interacts with human KPNA3; this interaction might play a role in nuclear import of the pre-integration complex. Interacts with human NUP153; this interaction might play a role in nuclear import of the pre-integration complex. It depends on Mg(2+) as a cofactor. Specific enzymatic cleavages by the viral protease yield mature proteins. The protease is released by autocatalytic cleavage. The polyprotein is cleaved during and after budding, this process is termed maturation. Proteolytic cleavage of p66 RT removes the RNase H domain to yield the p51 RT subunit. Nucleocapsid protein p7 might be further cleaved after virus entry. Post-translationally, tyrosine phosphorylated presumably in the virion by a host kinase. Phosphorylation is apparently not a major regulator of membrane association. In terms of processing, phosphorylated possibly by host MAPK1; this phosphorylation is necessary for Pin1-mediated virion uncoating. Methylated by host PRMT6, impairing its function by reducing RNA annealing and the initiation of reverse transcription.

The protein resides in the host cell membrane. It is found in the host endosome. It localises to the host multivesicular body. The protein localises to the virion membrane. Its subcellular location is the host nucleus. The protein resides in the host cytoplasm. It is found in the virion. The catalysed reaction is Specific for a P1 residue that is hydrophobic, and P1' variable, but often Pro.. The enzyme catalyses Endohydrolysis of RNA in RNA/DNA hybrids. Three different cleavage modes: 1. sequence-specific internal cleavage of RNA. Human immunodeficiency virus type 1 and Moloney murine leukemia virus enzymes prefer to cleave the RNA strand one nucleotide away from the RNA-DNA junction. 2. RNA 5'-end directed cleavage 13-19 nucleotides from the RNA end. 3. DNA 3'-end directed cleavage 15-20 nucleotides away from the primer terminus.. It carries out the reaction 3'-end directed exonucleolytic cleavage of viral RNA-DNA hybrid.. It catalyses the reaction DNA(n) + a 2'-deoxyribonucleoside 5'-triphosphate = DNA(n+1) + diphosphate. Protease: The viral protease is inhibited by many synthetic protease inhibitors (PIs), such as amprenavir, atazanavir, indinavir, loprinavir, nelfinavir, ritonavir and saquinavir. Use of protease inhibitors in tritherapy regimens permit more ambitious therapeutic strategies. Reverse transcriptase/ribonuclease H: RT can be inhibited either by nucleoside RT inhibitors (NRTIs) or by non nucleoside RT inhibitors (NNRTIs). NRTIs act as chain terminators, whereas NNRTIs inhibit DNA polymerization by binding a small hydrophobic pocket near the RT active site and inducing an allosteric change in this region. Classical NRTIs are abacavir, adefovir (PMEA), didanosine (ddI), lamivudine (3TC), stavudine (d4T), tenofovir (PMPA), zalcitabine (ddC), and zidovudine (AZT). Classical NNRTIs are atevirdine (BHAP U-87201E), delavirdine, efavirenz (DMP-266), emivirine (I-EBU), and nevirapine (BI-RG-587). The tritherapies used as a basic effective treatment of AIDS associate two NRTIs and one NNRTI. In terms of biological role, mediates, with Gag polyprotein, the essential events in virion assembly, including binding the plasma membrane, making the protein-protein interactions necessary to create spherical particles, recruiting the viral Env proteins, and packaging the genomic RNA via direct interactions with the RNA packaging sequence (Psi). Gag-Pol polyprotein may regulate its own translation, by the binding genomic RNA in the 5'-UTR. At low concentration, the polyprotein would promote translation, whereas at high concentration, the polyprotein would encapsidate genomic RNA and then shut off translation. Targets the polyprotein to the plasma membrane via a multipartite membrane-binding signal, that includes its myristoylated N-terminus. Matrix protein is part of the pre-integration complex. Implicated in the release from host cell mediated by Vpu. Binds to RNA. Functionally, forms the conical core that encapsulates the genomic RNA-nucleocapsid complex in the virion. Most core are conical, with only 7% tubular. The core is constituted by capsid protein hexamer subunits. The core is disassembled soon after virion entry. Host restriction factors such as TRIM5-alpha or TRIMCyp bind retroviral capsids and cause premature capsid disassembly, leading to blocks in reverse transcription. Capsid restriction by TRIM5 is one of the factors which restricts HIV-1 to the human species. Host PIN1 apparently facilitates the virion uncoating. On the other hand, interactions with PDZD8 or CYPA stabilize the capsid. Its function is as follows. Encapsulates and protects viral dimeric unspliced genomic RNA (gRNA). Binds these RNAs through its zinc fingers. Acts as a nucleic acid chaperone which is involved in rearangement of nucleic acid secondary structure during gRNA retrotranscription. Also facilitates template switch leading to recombination. As part of the polyprotein, participates in gRNA dimerization, packaging, tRNA incorporation and virion assembly. In terms of biological role, aspartyl protease that mediates proteolytic cleavages of Gag and Gag-Pol polyproteins during or shortly after the release of the virion from the plasma membrane. Cleavages take place as an ordered, step-wise cascade to yield mature proteins. This process is called maturation. Displays maximal activity during the budding process just prior to particle release from the cell. Also cleaves Nef and Vif, probably concomitantly with viral structural proteins on maturation of virus particles. Hydrolyzes host EIF4GI and PABP1 in order to shut off the capped cellular mRNA translation. The resulting inhibition of cellular protein synthesis serves to ensure maximal viral gene expression and to evade host immune response. Also mediates cleavage of host YTHDF3. Mediates cleavage of host CARD8, thereby activating the CARD8 inflammasome, leading to the clearance of latent HIV-1 in patient CD4(+) T-cells after viral reactivation; in contrast, HIV-1 can evade CARD8-sensing when its protease remains inactive in infected cells prior to viral budding. Multifunctional enzyme that converts the viral RNA genome into dsDNA in the cytoplasm, shortly after virus entry into the cell. This enzyme displays a DNA polymerase activity that can copy either DNA or RNA templates, and a ribonuclease H (RNase H) activity that cleaves the RNA strand of RNA-DNA heteroduplexes in a partially processive 3' to 5' endonucleasic mode. Conversion of viral genomic RNA into dsDNA requires many steps. A tRNA(3)-Lys binds to the primer-binding site (PBS) situated at the 5'-end of the viral RNA. RT uses the 3' end of the tRNA primer to perform a short round of RNA-dependent minus-strand DNA synthesis. The reading proceeds through the U5 region and ends after the repeated (R) region which is present at both ends of viral RNA. The portion of the RNA-DNA heteroduplex is digested by the RNase H, resulting in a ssDNA product attached to the tRNA primer. This ssDNA/tRNA hybridizes with the identical R region situated at the 3' end of viral RNA. This template exchange, known as minus-strand DNA strong stop transfer, can be either intra- or intermolecular. RT uses the 3' end of this newly synthesized short ssDNA to perform the RNA-dependent minus-strand DNA synthesis of the whole template. RNase H digests the RNA template except for two polypurine tracts (PPTs) situated at the 5'-end and near the center of the genome. It is not clear if both polymerase and RNase H activities are simultaneous. RNase H probably can proceed both in a polymerase-dependent (RNA cut into small fragments by the same RT performing DNA synthesis) and a polymerase-independent mode (cleavage of remaining RNA fragments by free RTs). Secondly, RT performs DNA-directed plus-strand DNA synthesis using the PPTs that have not been removed by RNase H as primers. PPTs and tRNA primers are then removed by RNase H. The 3' and 5' ssDNA PBS regions hybridize to form a circular dsDNA intermediate. Strand displacement synthesis by RT to the PBS and PPT ends produces a blunt ended, linear dsDNA copy of the viral genome that includes long terminal repeats (LTRs) at both ends. Functionally, catalyzes viral DNA integration into the host chromosome, by performing a series of DNA cutting and joining reactions. This enzyme activity takes place after virion entry into a cell and reverse transcription of the RNA genome in dsDNA. The first step in the integration process is 3' processing. This step requires a complex comprising the viral genome, matrix protein, Vpr and integrase. This complex is called the pre-integration complex (PIC). The integrase protein removes 2 nucleotides from each 3' end of the viral DNA, leaving recessed CA OH's at the 3' ends. In the second step, the PIC enters cell nucleus. This process is mediated through integrase and Vpr proteins, and allows the virus to infect a non dividing cell. This ability to enter the nucleus is specific of lentiviruses, other retroviruses cannot and rely on cell division to access cell chromosomes. In the third step, termed strand transfer, the integrase protein joins the previously processed 3' ends to the 5' ends of strands of target cellular DNA at the site of integration. The 5'-ends are produced by integrase-catalyzed staggered cuts, 5 bp apart. A Y-shaped, gapped, recombination intermediate results, with the 5'-ends of the viral DNA strands and the 3' ends of target DNA strands remaining unjoined, flanking a gap of 5 bp. The last step is viral DNA integration into host chromosome. This involves host DNA repair synthesis in which the 5 bp gaps between the unjoined strands are filled in and then ligated. Since this process occurs at both cuts flanking the HIV genome, a 5 bp duplication of host DNA is produced at the ends of HIV-1 integration. Alternatively, Integrase may catalyze the excision of viral DNA just after strand transfer, this is termed disintegration. The protein is Gag-Pol polyprotein (gag-pol) of Homo sapiens (Human).